We begin with the raw amino-acid sequence, 178 residues long: ATP-dependent protease subunit HslV (178 aa).

T7 is a catalytic residue. G162, C165, and T168 together coordinate Na(+).

Belongs to the peptidase T1B family. HslV subfamily. As to quaternary structure, a double ring-shaped homohexamer of HslV is capped on each side by a ring-shaped HslU homohexamer. The assembly of the HslU/HslV complex is dependent on binding of ATP.

It is found in the cytoplasm. The enzyme catalyses ATP-dependent cleavage of peptide bonds with broad specificity.. Its activity is regulated as follows. Allosterically activated by HslU binding. Functionally, protease subunit of a proteasome-like degradation complex believed to be a general protein degrading machinery. This chain is ATP-dependent protease subunit HslV, found in Burkholderia vietnamiensis (strain G4 / LMG 22486) (Burkholderia cepacia (strain R1808)).